We begin with the raw amino-acid sequence, 139 residues long: Trafficking protein particle complex subunit 2-like protein (139 aa).

The protein belongs to the TRAPP small subunits family. Sedlin subfamily. As to quaternary structure, component of the multisubunit TRAPP (transport protein particle) complex, which includes at least TRAPPC2, TRAPPC2L, TRAPPC3, TRAPPC3L, TRAPPC4, TRAPPC5, TRAPPC8, TRAPPC9, TRAPPC10, TRAPPC11 and TRAPPC12. Interacts with the heterodimer TRAPPC3-TRAPPC6A.

The protein resides in the cytoplasm. The protein localises to the perinuclear region. Its subcellular location is the endoplasmic reticulum. It localises to the golgi apparatus. Its function is as follows. May play a role in vesicular transport from endoplasmic reticulum to Golgi. In Mus musculus (Mouse), this protein is Trafficking protein particle complex subunit 2-like protein (Trappc2l).